Here is a 480-residue protein sequence, read N- to C-terminus: Adenosylhomocysteinase (480 aa).

3 residues coordinate substrate: T63, D142, and E203. 204–206 (TTT) provides a ligand contact to NAD(+). 2 residues coordinate substrate: K233 and D237. NAD(+) is bound by residues N238, 267-272 (GYGDVG), E290, N325, 346-348 (IGH), and N394.

This sequence belongs to the adenosylhomocysteinase family. Requires NAD(+) as cofactor.

Its subcellular location is the cytoplasm. The enzyme catalyses S-adenosyl-L-homocysteine + H2O = L-homocysteine + adenosine. The protein operates within amino-acid biosynthesis; L-homocysteine biosynthesis; L-homocysteine from S-adenosyl-L-homocysteine: step 1/1. In terms of biological role, may play a key role in the regulation of the intracellular concentration of adenosylhomocysteine. The sequence is that of Adenosylhomocysteinase from Xylella fastidiosa (strain 9a5c).